The primary structure comprises 645 residues: UvrABC system protein C (645 aa).

Residues 12 to 91 form the GIY-YIG domain; sequence TGPGVYLYKN…IKQRKPRFNV (80 aa). A UVR domain is found at 202-237; it reads ADLERSLEVRMQEAAAAEQFELAAKYRDLLVTLHQL.

The protein belongs to the UvrC family. In terms of assembly, interacts with UvrB in an incision complex.

The protein localises to the cytoplasm. Functionally, the UvrABC repair system catalyzes the recognition and processing of DNA lesions. UvrC both incises the 5' and 3' sides of the lesion. The N-terminal half is responsible for the 3' incision and the C-terminal half is responsible for the 5' incision. The polypeptide is UvrABC system protein C (Acidobacterium capsulatum (strain ATCC 51196 / DSM 11244 / BCRC 80197 / JCM 7670 / NBRC 15755 / NCIMB 13165 / 161)).